Consider the following 210-residue polypeptide: Thymidylate kinase (210 aa).

16–23 provides a ligand contact to ATP; sequence GGDGVGKS.

It belongs to the thymidylate kinase family.

The enzyme catalyses dTMP + ATP = dTDP + ADP. Phosphorylation of dTMP to form dTDP in both de novo and salvage pathways of dTTP synthesis. This chain is Thymidylate kinase, found in Leifsonia xyli subsp. xyli (strain CTCB07).